A 352-amino-acid polypeptide reads, in one-letter code: DNA integrity scanning protein DisA (352 aa).

Positions 3–143 (PQELIEKIKL…NYKYVVNQVD (141 aa)) constitute a DAC domain. Residues G71, L89, and 102-106 (TRHRT) each bind ATP.

The protein belongs to the DisA family. As to quaternary structure, homooctamer. It depends on Mg(2+) as a cofactor.

It carries out the reaction 2 ATP = 3',3'-c-di-AMP + 2 diphosphate. In terms of biological role, participates in a DNA-damage check-point. DisA forms globular foci that rapidly scan along the chromosomes searching for lesions. Its function is as follows. Also has diadenylate cyclase activity, catalyzing the condensation of 2 ATP molecules into cyclic di-AMP (c-di-AMP). c-di-AMP likely acts as a signaling molecule that may couple DNA integrity with a cellular process. This is DNA integrity scanning protein DisA from Thermotoga petrophila (strain ATCC BAA-488 / DSM 13995 / JCM 10881 / RKU-1).